The following is a 91-amino-acid chain: Sec-independent protein translocase protein TatA (91 aa).

The helical transmembrane segment at 3–23 (FFGIGLPEMLVILAIALLVFG) threads the bilayer. A disordered region spans residues 57–91 (DRTPATPAEATVEPPVLDSAPTEAVTVEKQTETQV). Positions 59–72 (TPATPAEATVEPPV) are enriched in low complexity.

It belongs to the TatA/E family. As to quaternary structure, forms a complex with TatC.

The protein resides in the cell inner membrane. Part of the twin-arginine translocation (Tat) system that transports large folded proteins containing a characteristic twin-arginine motif in their signal peptide across membranes. TatA could form the protein-conducting channel of the Tat system. This chain is Sec-independent protein translocase protein TatA, found in Synechococcus elongatus (strain ATCC 33912 / PCC 7942 / FACHB-805) (Anacystis nidulans R2).